We begin with the raw amino-acid sequence, 242 residues long: uncharacterized protein (242 aa).

S-adenosyl-L-methionine contacts are provided by G198, I218, and L227.

It belongs to the class IV-like SAM-binding methyltransferase superfamily. RNA methyltransferase TrmH family.

This is an uncharacterized protein from Mycoplasma genitalium (strain ATCC 33530 / DSM 19775 / NCTC 10195 / G37) (Mycoplasmoides genitalium).